A 246-amino-acid chain; its full sequence is Protein DEHYDRATION-INDUCED 19 homolog 3 (246 aa).

The tract at residues 185-230 (ERSKAPVPIPDDTSIHKDTPAQPWESRIDSSLTSEEREQKRKQATD) is disordered. Residues 218-229 (SEEREQKRKQAT) are compositionally biased toward basic and acidic residues.

Belongs to the Di19 family.

This Oryza sativa subsp. japonica (Rice) protein is Protein DEHYDRATION-INDUCED 19 homolog 3 (DI19-3).